The following is a 378-amino-acid chain: Chorismate synthase (378 aa).

Positions 48 and 54 each coordinate NADP(+). FMN contacts are provided by residues 125–127, 238–239, G278, 293–297, and R319; these read RSS, NA, and KPTSS.

It belongs to the chorismate synthase family. In terms of assembly, homotetramer. FMNH2 serves as cofactor.

The enzyme catalyses 5-O-(1-carboxyvinyl)-3-phosphoshikimate = chorismate + phosphate. It functions in the pathway metabolic intermediate biosynthesis; chorismate biosynthesis; chorismate from D-erythrose 4-phosphate and phosphoenolpyruvate: step 7/7. Catalyzes the anti-1,4-elimination of the C-3 phosphate and the C-6 proR hydrogen from 5-enolpyruvylshikimate-3-phosphate (EPSP) to yield chorismate, which is the branch point compound that serves as the starting substrate for the three terminal pathways of aromatic amino acid biosynthesis. This reaction introduces a second double bond into the aromatic ring system. The chain is Chorismate synthase from Azoarcus sp. (strain BH72).